Here is a 455-residue protein sequence, read N- to C-terminus: MTISPQYIWNQVLDRLKLRLNPTAYETWIASATVQTFQDNCLVIQVENPFILNHLQKTYYSLILEEVETIVGYPIAVKLTTSQEQNLRIVDKNKDNLSSTKLQNKRQQESPKLNQLNPRYNFSRFVVGPTNRMAHAASLAVAESPGREFNPLFLCGGVGLGKTHLMQAIAYYRLELYPNANVFYVSTEQFTNDLITSIRQDSMENFREHYRTADILLVDDIQFIEGKEYTQEEFFHTFNTLHEAGKQVVIASDRPPKRIPSLQDRLVSRFSMGLIADIQVPDLETRMAILQKKAEYENIRLPRDVIEYIATNYTSNIRELEGALIRAVTYISISGLSMTVENIAPVLNPPMEQITASPEIIIQIVAENFNVSVEDLKGSSRRREISLARQIGMYLMRQHTDLSLPRIGEEFGGKDHTTVLYSCDKISKLQKKDWDLSQQLSELSDRINIASRNQN.

Positions methionine 1 to tyrosine 73 are domain I, interacts with DnaA modulators. The tract at residues tyrosine 73 to asparagine 114 is domain II. The tract at residues glutamine 115–isoleucine 331 is domain III, AAA+ region. Positions 159, 161, 162, and 163 each coordinate ATP. Residues serine 332 to asparagine 455 form a domain IV, binds dsDNA region.

Belongs to the DnaA family. In terms of assembly, oligomerizes as a right-handed, spiral filament on DNA at oriC.

The protein localises to the cytoplasm. Functionally, plays an essential role in the initiation and regulation of chromosomal replication. ATP-DnaA binds to the origin of replication (oriC) to initiate formation of the DNA replication initiation complex once per cell cycle. Binds the DnaA box (a 9 base pair repeat at the origin) and separates the double-stranded (ds)DNA. Forms a right-handed helical filament on oriC DNA; dsDNA binds to the exterior of the filament while single-stranded (ss)DNA is stabiized in the filament's interior. The ATP-DnaA-oriC complex binds and stabilizes one strand of the AT-rich DNA unwinding element (DUE), permitting loading of DNA polymerase. After initiation quickly degrades to an ADP-DnaA complex that is not apt for DNA replication. Binds acidic phospholipids. The sequence is that of Chromosomal replication initiator protein DnaA from Crocosphaera subtropica (strain ATCC 51142 / BH68) (Cyanothece sp. (strain ATCC 51142)).